We begin with the raw amino-acid sequence, 153 residues long: Insulin-like growth factor 1 (153 aa).

The b stretch occupies residues 49–77 (GPETLCGAELVDALQFVCGDRGFYFNKPT). 3 disulfide bridges follow: C54/C96, C66/C109, and C95/C100. Residues 78–89 (GYGSSSRRAPQT) are c. The interval 90-110 (GIVDECCFRSCDLRRLEMYCA) is a. The d stretch occupies residues 111–118 (PLKPAKSA). Residues 119-153 (RSVRAQRHTDMPKAQKEVHLKNASRGSAGNKNYRM) constitute a propeptide, e peptide. The segment at 120 to 153 (SVRAQRHTDMPKAQKEVHLKNASRGSAGNKNYRM) is disordered. Over residues 125 to 138 (RHTDMPKAQKEVHL) the composition is skewed to basic and acidic residues. Positions 142-153 (SRGSAGNKNYRM) are enriched in polar residues.

This sequence belongs to the insulin family. As to quaternary structure, forms a ternary complex with IGFR1 and ITGAV:ITGB3. Forms a ternary complex with IGFR1 and ITGA6:ITGB4. Forms a ternary complex with IGFBP3 and ALS.

The protein resides in the secreted. The insulin-like growth factors, isolated from plasma, are structurally and functionally related to insulin but have a much higher growth-promoting activity. May be a physiological regulator of [1-14C]-2-deoxy-D-glucose (2DG) transport and glycogen synthesis in osteoblasts. Stimulates glucose transport in bone-derived osteoblastic (PyMS) cells and is effective at much lower concentrations than insulin, not only regarding glycogen and DNA synthesis but also with regard to enhancing glucose uptake. May play a role in synapse maturation. Ca(2+)-dependent exocytosis of IGF1 is required for sensory perception of smell in the olfactory bulb. Acts as a ligand for IGF1R. Binds to the alpha subunit of IGF1R, leading to the activation of the intrinsic tyrosine kinase activity which autophosphorylates tyrosine residues in the beta subunit thus initiating a cascade of down-stream signaling events leading to activation of the PI3K-AKT/PKB and the Ras-MAPK pathways. Binds to integrins ITGAV:ITGB3 and ITGA6:ITGB4. Its binding to integrins and subsequent ternary complex formation with integrins and IGFR1 are essential for IGF1 signaling. Induces the phosphorylation and activation of IGFR1, MAPK3/ERK1, MAPK1/ERK2 and AKT1. As part of the MAPK/ERK signaling pathway, acts as a negative regulator of apoptosis in cardiomyocytes via promotion of STUB1/CHIP-mediated ubiquitination and degradation of ICER-type isoforms of CREM. The protein is Insulin-like growth factor 1 of Rhinopithecus roxellana (Golden snub-nosed monkey).